We begin with the raw amino-acid sequence, 87 residues long: Small ribosomal subunit protein bS21 (87 aa).

A compositionally biased stretch (basic and acidic residues) spans 47 to 63 (YEKPSEKRARQKAEAVR). A disordered region spans residues 47–87 (YEKPSEKRARQKAEAVRRARKLARKRAQREGLLPMPKKPGR). Residues 64–73 (RARKLARKRA) show a composition bias toward basic residues.

This sequence belongs to the bacterial ribosomal protein bS21 family.

The polypeptide is Small ribosomal subunit protein bS21 (Caulobacter vibrioides (strain ATCC 19089 / CIP 103742 / CB 15) (Caulobacter crescentus)).